Reading from the N-terminus, the 354-residue chain is Guanine nucleotide-binding protein G(i) subunit alpha-1 (354 aa).

Residue Gly2 is the site of N-myristoyl glycine attachment. Cys3 is lipidated: S-palmitoyl cysteine. Positions 32 to 354 (REVKLLLLGA…KNNLKDCGLF (323 aa)) constitute a G-alpha domain. Residues 35–48 (KLLLLGAGESGKST) are G1 motif. GTP is bound by residues 43–48 (ESGKST), 150–151 (DS), and 175–178 (LRTR). Residue Ser47 coordinates Mg(2+). A G2 motif region spans residues 173 to 181 (DVLRTRVKT). Thr181 contacts Mg(2+). The tract at residues 196–205 (FKMFDVGGQR) is G3 motif. Residues 200-204 (DVGGQ), 269-272 (NKKD), and Ala326 contribute to the GTP site. The G4 motif stretch occupies residues 265–272 (ILFLNKKD). The tract at residues 324 to 329 (TCATDT) is G5 motif.

The protein belongs to the G-alpha family. G(i/o/t/z) subfamily. In terms of assembly, heterotrimeric G proteins are composed of 3 units; alpha, beta and gamma. The alpha chain contains the guanine nucleotide binding site. Part of a spindle orientation complex at least composed of GNAI1, GPSM2 and NUMA1. Identified in complex with the beta subunit GNB1 and the gamma subunit GNG1. Identified in complex with the beta subunit GNB1 and the gamma subunit GNG2. Component of the TAS2R14-GNAI1 complex, consisting of TAS2R14, GNAI1, GNB1 and GNG2; within the complex interacts with TAS2R14; this complex plays a role in the perception of bitterness. GTP binding causes dissociation of the heterotrimer, liberating the individual subunits so that they can interact with downstream effector proteins. Interacts (GDP-bound form) with GPSM1; this inhibits guanine nucleotide exchange and GTP binding. Interacts (GDP-bound form) with GPSM2 (via GoLoco domains); this inhibits guanine nucleotide exchange. Interacts with RGS10; this strongly enhances GTP hydrolysis. Interacts with RGS1 and RGS16; this strongly enhances GTPase activity. Interacts with RGS4. Interacts with RGS12. Interacts (via active GTP- or inactive GDP-bound forms) with RGS14 (via RGS and GoLoco domains). Interacts with RGS3, RGS6, RGS7, RGS8, RGS17, RGS18 and RGS20 (in vitro). Interacts (GDP-bound form) with RIC8A (via C-terminus); promoting GNAI1 folding and association with the plasma membrane. Interacts (inactive GDP-bound form) with NUCB1 (via GBA motif); the interaction leads to activation of GNAI1. Interacts (inactive GDP-bound form) with CCDC88C/DAPLE (via GBA motif); the interaction leads to activation of GNAI1. Interacts (inactive GDP-bound form) with CCDC8A/GIV (via GBA motif). Post-translationally, myristoylation at Gly-2 is required for membrane anchoring before palmitoylation. Palmitoylation at Cys-3 varies with membrane lipid composition. Mainly expressed in the brain, lung and kidney.

It is found in the nucleus. The protein localises to the cytoplasm. The protein resides in the cell membrane. Its subcellular location is the cytoskeleton. It localises to the microtubule organizing center. It is found in the centrosome. The protein localises to the cell cortex. The protein resides in the membrane. The enzyme catalyses GTP + H2O = GDP + phosphate + H(+). Functionally, guanine nucleotide-binding proteins (G proteins) function as transducers downstream of G protein-coupled receptors (GPCRs) in numerous signaling cascades. The alpha chain contains the guanine nucleotide binding site and alternates between an active, GTP-bound state and an inactive, GDP-bound state. Signaling by an activated GPCR promotes GDP release and GTP binding. The alpha subunit has a low GTPase activity that converts bound GTP to GDP, thereby terminating the signal. Both GDP release and GTP hydrolysis are modulated by numerous regulatory proteins. Signaling is mediated via effector proteins, such as adenylate cyclase. Inhibits adenylate cyclase activity of ADCY1, ADCY5 and ADCY6, leading to decreased intracellular cAMP levels. The inactive GDP-bound form prevents the association of RGS14 with centrosomes and is required for the translocation of RGS14 from the cytoplasm to the plasma membrane. Required for normal cytokinesis during mitosis. Required for cortical dynein-dynactin complex recruitment during metaphase. The polypeptide is Guanine nucleotide-binding protein G(i) subunit alpha-1 (GNAI1) (Cavia porcellus (Guinea pig)).